The following is a 134-amino-acid chain: Acyl carrier protein, chloroplastic (134 aa).

The N-terminal 51 residues, Met-1 to Cys-51, are a transit peptide targeting the chloroplast. Residues Pro-55–Val-130 form the Carrier domain. An O-(pantetheine 4'-phosphoryl)serine modification is found at Ser-90.

This sequence belongs to the acyl carrier protein (ACP) family. In terms of processing, 4'-phosphopantetheine is transferred from CoA to a specific serine of apo-ACP by acpS. This modification is essential for activity because fatty acids are bound in thioester linkage to the sulfhydryl of the prosthetic group. In terms of tissue distribution, seed.

The protein resides in the plastid. It localises to the chloroplast. It participates in lipid metabolism; fatty acid biosynthesis. Carrier of the growing fatty acid chain in fatty acid biosynthesis. The chain is Acyl carrier protein, chloroplastic (ACL1.A2) from Brassica napus (Rape).